The following is a 319-amino-acid chain: Methionyl-tRNA formyltransferase (319 aa).

116–119 is a binding site for (6S)-5,6,7,8-tetrahydrofolate; the sequence is SLLP.

It belongs to the Fmt family.

The catalysed reaction is L-methionyl-tRNA(fMet) + (6R)-10-formyltetrahydrofolate = N-formyl-L-methionyl-tRNA(fMet) + (6S)-5,6,7,8-tetrahydrofolate + H(+). Functionally, attaches a formyl group to the free amino group of methionyl-tRNA(fMet). The formyl group appears to play a dual role in the initiator identity of N-formylmethionyl-tRNA by promoting its recognition by IF2 and preventing the misappropriation of this tRNA by the elongation apparatus. The sequence is that of Methionyl-tRNA formyltransferase from Chlorobium phaeovibrioides (strain DSM 265 / 1930) (Prosthecochloris vibrioformis (strain DSM 265)).